The chain runs to 527 residues: 2-isopropylmalate synthase (527 aa).

Residues 18–280 (IRIFDTTLRD…QTNINSKRLV (263 aa)) enclose the Pyruvate carboxyltransferase domain. Mn(2+) contacts are provided by Asp27, His215, His217, and Asn251. The tract at residues 405 to 527 (TLVDYEVTSG…ASDPGELPQP (123 aa)) is regulatory domain.

Belongs to the alpha-IPM synthase/homocitrate synthase family. LeuA type 1 subfamily. In terms of assembly, homodimer. Mn(2+) serves as cofactor.

It is found in the cytoplasm. The catalysed reaction is 3-methyl-2-oxobutanoate + acetyl-CoA + H2O = (2S)-2-isopropylmalate + CoA + H(+). It participates in amino-acid biosynthesis; L-leucine biosynthesis; L-leucine from 3-methyl-2-oxobutanoate: step 1/4. In terms of biological role, catalyzes the condensation of the acetyl group of acetyl-CoA with 3-methyl-2-oxobutanoate (2-ketoisovalerate) to form 3-carboxy-3-hydroxy-4-methylpentanoate (2-isopropylmalate). In Rhodopirellula baltica (strain DSM 10527 / NCIMB 13988 / SH1), this protein is 2-isopropylmalate synthase.